A 377-amino-acid polypeptide reads, in one-letter code: Dehydrogenase/reductase SDR family member 13 (377 aa).

Residues 1-25 form the signal peptide; sequence MEALLLGVGLLLGAYVLVYYNLVKA. Residues serine 46 and isoleucine 48 each coordinate NAD(+). Serine 170 contacts substrate. Positions 197, 201, and 232 each coordinate NAD(+). Tyrosine 197 serves as the catalytic Proton acceptor. The interval 310-363 is disordered; sequence LAGLGPGEDAESDEDSQPEDPGTPSSPSSPHPEEPTVSELYPSPQSSTDRSTVT. Acidic residues predominate over residues 317–327; that stretch reads EDAESDEDSQP. Low complexity predominate over residues 328-337; sequence EDPGTPSSPS. Residues 352-363 are compositionally biased toward polar residues; the sequence is SPQSSTDRSTVT.

The protein belongs to the short-chain dehydrogenases/reductases (SDR) family.

The protein resides in the secreted. Functionally, putative oxidoreductase. This is Dehydrogenase/reductase SDR family member 13 (DHRS13) from Bos taurus (Bovine).